Reading from the N-terminus, the 935-residue chain is Progesterone receptor (935 aa).

Residues 1-164 form an AF3; mediates transcriptional activation region; it reads MTELKAKGPR…PATQGVLSPL (164 aa). Positions 1 to 254 are disordered; sequence MTELKAKGPR…GGAAAGGGAA (254 aa). The segment at 1–568 is modulating, Pro-Rich; the sequence is MTELKAKGPR…YSFESLPQKI (568 aa). S20 is subject to Phosphoserine. The LXXL motif 1 motif lies at 55-59; the sequence is LDGLL. At S81 the chain carries Phosphoserine. The short motif at 115 to 119 is the LXXL motif 2 element; that stretch reads LDTLL. Phosphoserine occurs at positions 130 and 162. Residues 165 to 305 are mediates transcriptional transrepression; the sequence is MSRSGGKAGD…LATTVMDFIH (141 aa). Residues 183–187 carry the Nuclear localization signal motif; the sequence is KVLPR. Residues S190 and S213 each carry the phosphoserine modification. Positions 220 to 231 are enriched in acidic residues; that stretch reads EVEEEDGSESED. Over residues 232–246 the composition is skewed to low complexity; it reads SAGPLLKGKPRALGG. Phosphoserine; by MAPK1 is present on S294. The disordered stretch occupies residues 331-378; sequence GGAGAASAFAPPRSSPSASSTPVAVGDFPDCAYPPDAEPKDDAYPLYS. Over residues 335–350 the composition is skewed to low complexity; it reads AASAFAPPRSSPSASS. S345 carries the phosphoserine; by MAPK modification. A Glycyl lysine isopeptide (Lys-Gly) (interchain with G-Cter in SUMO); alternate cross-link involves residue K388. K388 is covalently cross-linked (Glycyl lysine isopeptide (Lys-Gly) (interchain with G-Cter in ubiquitin); alternate). The residue at position 400 (S400) is a Phosphoserine; by CDK2. Over residues 418 to 430 the composition is skewed to pro residues; the sequence is PLGPPPPLPPRAP. A disordered region spans residues 418–438; that stretch reads PLGPPPPLPPRAPPTRAGEAA. The interval 456–548 is AF1; mediates transcriptional activation; the sequence is STLECILYKA…VYPPYLNYLR (93 aa). A Glycyl lysine isopeptide (Lys-Gly) (interchain with G-Cter in SUMO) cross-link involves residue K533. NR C4-type zinc fingers lie at residues 569–589 and 605–629; these read CLIC…CGSC and CAGR…LRKC. Residues 569 to 641 constitute a DNA-binding region (nuclear receptor); it reads CLICGDEASG…AGMVLGGRKF (73 aa). Position 678 is a phosphoserine (S678). One can recognise an NR LBD domain in the interval 681–915; that stretch reads QDIQLIPPLI…EFPEMMSEVI (235 aa). The segment at 689 to 935 is AF2; mediates transcriptional activation; sequence LINLLMSIEP…MVKPLLFHKK (247 aa).

This sequence belongs to the nuclear hormone receptor family. In terms of assembly, interacts with SMARD1 and UNC45A. Interacts with CUEDC2; the interaction promotes ubiquitination, decreases sumoylation, and represses transcriptional activity. Interacts with PIAS3; the interaction promotes sumoylation of PR in a hormone-dependent manner, inhibits DNA-binding, and alters nuclear export. Interacts with SP1; the interaction requires ligand-induced phosphorylation on Ser-345 by ERK1/2-MAPK. Interacts with PRMT2. Interacts with NCOA2 and NCOA1. Interacts with KLF9. Interacts with GTF2B. In terms of processing, phosphorylated on multiple serine sites. Several of these sites are hormone-dependent. Phosphorylation on Ser-294 is highly hormone-dependent and modulates ubiquitination and sumoylation on Lys-388. Phosphorylation on Ser-102 and Ser-345 also requires induction by hormone. Basal phosphorylation on Ser-81, Ser-162, Ser-190 and Ser-400 is increased in response to progesterone and can be phosphorylated in vitro by the CDK2-A1 complex. Increased levels of phosphorylation on Ser-400 also in the presence of EGF, heregulin, IGF, PMA and FBS. Phosphorylation at this site by CDK2 is ligand-independent, and increases nuclear translocation and transcriptional activity. Phosphorylation at Ser-162 and Ser-294, but not at Ser-190, is impaired during the G(2)/M phase of the cell cycle. Phosphorylation on Ser-345 by ERK1/2 MAPK is required for interaction with SP1. Sumoylation is hormone-dependent and represses transcriptional activity. Sumoylation on all three sites is enhanced by PIAS3. Desumoylated by SENP1. Sumoylation on Lys-388, the main site of sumoylation, is repressed by ubiquitination on the same site, and modulated by phosphorylation at Ser-294. Post-translationally, ubiquitination is hormone-dependent and represses sumoylation on the same site. Promoted by MAPK-mediated phosphorylation on Ser-294. In terms of processing, palmitoylated by ZDHHC7 and ZDHHC21. Palmitoylation is required for plasma membrane targeting and for rapid intracellular signaling via ERK and AKT kinases and cAMP generation.

The protein localises to the nucleus. The protein resides in the cytoplasm. Functionally, the steroid hormones and their receptors are involved in the regulation of eukaryotic gene expression and affect cellular proliferation and differentiation in target tissues. Transcriptional activator of several progesteron-dependent promoters in a variety of cell types. Involved in activation of SRC-dependent MAPK signaling on hormone stimulation. This Pongo pygmaeus (Bornean orangutan) protein is Progesterone receptor (PGR).